The primary structure comprises 183 residues: uncharacterized protein (183 aa).

Transmembrane regions (helical) follow at residues 13–35 (KALL…LTYS), 60–82 (LLIL…KLRF), 117–139 (FEPV…YAIF), and 149–171 (LLFY…LYLS).

It localises to the cell membrane. This is an uncharacterized protein from Archaeoglobus fulgidus (strain ATCC 49558 / DSM 4304 / JCM 9628 / NBRC 100126 / VC-16).